We begin with the raw amino-acid sequence, 332 residues long: MATLKDQLIYNLLKEEQTPQNKITVVGVGAVGMACAISILMKDLADELALVDVIEDKLKGEMMDLQHGSLFLRTPKIVSGKDYNVTANSKLVIITAGARQQEGESRLNLVQRNVNIFKFIIPNVVKYSPNCKLLIVSNPVDILTYVAWKISGFPKNRVIGSGCNLDSARFRYLMGERLGVHPLSCHGWVLGEHGDSSVPVWSGMNVAGVSLKTLHPDLGTDKDKEQWKEVHKQVVESAYEVIKLKGYTSWAIGLSVADLAESIMKNLRRVHPVSTMIKGLYGIKDDVFLSVPCILGQNGISDLVKVTLTSEEEARLKKSADTLWGIQKELQF.

At Ala2 the chain carries N-acetylalanine. Position 5 is an N6-acetyllysine; alternate (Lys5). Lys5 is subject to N6-succinyllysine; alternate. Tyr10 is subject to Phosphotyrosine. Lys14 is modified (N6-acetyllysine). The residue at position 18 (Thr18) is a Phosphothreonine. Gly29–Lys57 contacts NAD(+). Lys57 bears the N6-acetyllysine; alternate mark. Lys57 participates in a covalent cross-link: Glycyl lysine isopeptide (Lys-Gly) (interchain with G-Cter in SUMO2); alternate. Position 81 is an N6-acetyllysine (Lys81). Residue Arg99 participates in NAD(+) binding. Arg106 contributes to the substrate binding site. Lys118 carries the N6-acetyllysine; alternate modification. The residue at position 118 (Lys118) is an N6-succinyllysine; alternate. Lys126 is modified (N6-acetyllysine). Asn138 serves as a coordination point for NAD(+). Residues Asn138 and Arg169 each coordinate substrate. Catalysis depends on His193, which acts as the Proton acceptor. 2 positions are modified to N6-acetyllysine: Lys224 and Lys232. Tyr239 is subject to Phosphotyrosine. N6-acetyllysine is present on Lys243. Thr248 is a substrate binding site. A Phosphothreonine modification is found at Thr309. Position 310 is a phosphoserine (Ser310). Residue Lys318 is modified to N6-acetyllysine; alternate. Lys318 is subject to N6-succinyllysine; alternate. Thr322 is modified (phosphothreonine).

Belongs to the LDH/MDH superfamily. LDH family. Homotetramer. Interacts with PTEN upstream reading frame protein MP31. Interacts with folliculin FLCN; the interaction is direct and inhibits enzymatic activity. In terms of processing, ISGylated. As to expression, predominantly expressed in anaerobic tissues such as skeletal muscle and liver.

It is found in the cytoplasm. The catalysed reaction is (S)-lactate + NAD(+) = pyruvate + NADH + H(+). It functions in the pathway fermentation; pyruvate fermentation to lactate; (S)-lactate from pyruvate: step 1/1. Its activity is regulated as follows. Fermentation of pyruvate to lactate is inhibited when bound to folliculin FLCN, perhaps partly by FLCN preventing binding of cofactor NADH. Its function is as follows. Interconverts simultaneously and stereospecifically pyruvate and lactate with concomitant interconversion of NADH and NAD(+). This is L-lactate dehydrogenase A chain from Homo sapiens (Human).